The primary structure comprises 392 residues: Multidrug resistance protein MdtL (392 aa).

Helical transmembrane passes span 4 to 24 (FLLC…MYLV), 38 to 58 (AQLH…MLFA), 69 to 89 (PVAI…AQVH), 95 to 115 (LIGR…AFAI), 131 to 151 (LLNG…HLIM), 158 to 178 (SLFY…VFIL), 209 to 229 (LLIT…SPVL), 246 to 266 (ALMA…LSLF), 270 to 290 (TLML…SLAT), 294 to 314 (VTLI…GVAM), 331 to 351 (VLGI…AIIG), and 357 to 377 (MLIG…LVVT).

The protein belongs to the major facilitator superfamily. DHA1 family. MdtL (TC 2.A.1.2.22) subfamily.

Its subcellular location is the cell inner membrane. The polypeptide is Multidrug resistance protein MdtL (Klebsiella pneumoniae subsp. pneumoniae (strain ATCC 700721 / MGH 78578)).